The following is a 133-amino-acid chain: Interleukin-4 (133 aa).

Residues 1-24 (MGLTSQLIPMLVCLLACTSNFVHG) form the signal peptide. Disulfide bonds link C27-C133, C48-C85, and C70-C105. Residues N62, N96, and N102 are each glycosylated (N-linked (GlcNAc...) asparagine).

It belongs to the IL-4/IL-13 family.

It localises to the secreted. In terms of biological role, participates in at least several B-cell activation processes as well as of other cell types. It is a costimulator of DNA-synthesis. It induces the expression of class II MHC molecules on resting B-cells. It enhances both secretion and cell surface expression of IgE and IgG1. It also regulates the expression of the low affinity Fc receptor for IgE (CD23) on both lymphocytes and monocytes. Positively regulates IL31RA expression in macrophages. Stimulates autophagy in dendritic cells by interfering with mTORC1 signaling and through the induction of RUFY4. The polypeptide is Interleukin-4 (IL4) (Tursiops truncatus (Atlantic bottle-nosed dolphin)).